The following is a 586-amino-acid chain: Alpha-1,2-mannosyltransferase MNN5 (586 aa).

The N-terminal stretch at 1–29 (MLIRLKKRKILQVIVSAVVLILFFCSVHN) is a signal peptide. N-linked (GlcNAc...) asparagine glycosylation is found at N113, N136, N259, and N264.

It belongs to the MNN1/MNT family. Interacts with SVP26. Glycosylated.

The protein localises to the golgi apparatus. It localises to the cis-Golgi network. It functions in the pathway protein modification; protein glycosylation. Responsible for addition of first and second mannose residues to the outer chain of core N-linked polysaccharides and to O-linked mannotriose. Implicated in late Golgi modifications. This chain is Alpha-1,2-mannosyltransferase MNN5 (MNN5), found in Saccharomyces cerevisiae (strain ATCC 204508 / S288c) (Baker's yeast).